A 553-amino-acid polypeptide reads, in one-letter code: Methyl-coenzyme M reductase subunit alpha (553 aa).

Q151 contributes to the coenzyme F430 binding site. Residues R229, 260 to 261 (KH), and R274 contribute to the coenzyme B site. 2 residues coordinate coenzyme M: Y336 and Y447.

It belongs to the methyl-coenzyme M reductase alpha subunit family. As to quaternary structure, MCR is a hexamer of two alpha, two beta, and two gamma chains, forming a dimer of heterotrimers. Coenzyme F430 is required as a cofactor.

Its subcellular location is the cytoplasm. The enzyme catalyses coenzyme B + methyl-coenzyme M = methane + coenzyme M-coenzyme B heterodisulfide. Its pathway is one-carbon metabolism; methyl-coenzyme M reduction; methane from methyl-coenzyme M: step 1/1. Component of the methyl-coenzyme M reductase (MCR) I that catalyzes the reductive cleavage of methyl-coenzyme M (CoM-S-CH3 or 2-(methylthio)ethanesulfonate) using coenzyme B (CoB or 7-mercaptoheptanoylthreonine phosphate) as reductant which results in the production of methane and the mixed heterodisulfide of CoB and CoM (CoM-S-S-CoB). This is the final step in methanogenesis. The protein is Methyl-coenzyme M reductase subunit alpha (mcrA) of Methanococcus vannielii.